The following is a 301-amino-acid chain: N-acetylmuramic acid 6-phosphate etherase (301 aa).

The 164-residue stretch at 57-220 (IAETFMKNGR…TTGAMIKTGK (164 aa)) folds into the SIS domain. Catalysis depends on E85, which acts as the Proton donor. The active site involves E116.

Belongs to the GCKR-like family. MurNAc-6-P etherase subfamily. In terms of assembly, homodimer.

The catalysed reaction is N-acetyl-D-muramate 6-phosphate + H2O = N-acetyl-D-glucosamine 6-phosphate + (R)-lactate. Its pathway is amino-sugar metabolism; 1,6-anhydro-N-acetylmuramate degradation. It participates in amino-sugar metabolism; N-acetylmuramate degradation. It functions in the pathway cell wall biogenesis; peptidoglycan recycling. Its function is as follows. Specifically catalyzes the cleavage of the D-lactyl ether substituent of MurNAc 6-phosphate, producing GlcNAc 6-phosphate and D-lactate. Together with AnmK, is also required for the utilization of anhydro-N-acetylmuramic acid (anhMurNAc) either imported from the medium or derived from its own cell wall murein, and thus plays a role in cell wall recycling. The chain is N-acetylmuramic acid 6-phosphate etherase from Pasteurella multocida (strain Pm70).